A 361-amino-acid chain; its full sequence is Queuine tRNA-ribosyltransferase (361 aa).

Aspartate 92 serves as the catalytic Proton acceptor. Residues 92 to 96 (DSGGF), aspartate 146, glutamine 189, and glycine 216 each bind substrate. The RNA binding stretch occupies residues 247-253 (GVGKPAD). Catalysis depends on aspartate 266, which acts as the Nucleophile. Positions 271 to 275 (TRSGR) are RNA binding; important for wobble base 34 recognition. 4 residues coordinate Zn(2+): cysteine 304, cysteine 306, cysteine 309, and histidine 335.

This sequence belongs to the queuine tRNA-ribosyltransferase family. Homodimer. Within each dimer, one monomer is responsible for RNA recognition and catalysis, while the other monomer binds to the replacement base PreQ1. Requires Zn(2+) as cofactor.

The enzyme catalyses 7-aminomethyl-7-carbaguanine + guanosine(34) in tRNA = 7-aminomethyl-7-carbaguanosine(34) in tRNA + guanine. The protein operates within tRNA modification; tRNA-queuosine biosynthesis. Its function is as follows. Catalyzes the base-exchange of a guanine (G) residue with the queuine precursor 7-aminomethyl-7-deazaguanine (PreQ1) at position 34 (anticodon wobble position) in tRNAs with GU(N) anticodons (tRNA-Asp, -Asn, -His and -Tyr). Catalysis occurs through a double-displacement mechanism. The nucleophile active site attacks the C1' of nucleotide 34 to detach the guanine base from the RNA, forming a covalent enzyme-RNA intermediate. The proton acceptor active site deprotonates the incoming PreQ1, allowing a nucleophilic attack on the C1' of the ribose to form the product. After dissociation, two additional enzymatic reactions on the tRNA convert PreQ1 to queuine (Q), resulting in the hypermodified nucleoside queuosine (7-(((4,5-cis-dihydroxy-2-cyclopenten-1-yl)amino)methyl)-7-deazaguanosine). In Rickettsia peacockii (strain Rustic), this protein is Queuine tRNA-ribosyltransferase.